Reading from the N-terminus, the 115-residue chain is Ribonuclease P protein component (115 aa).

Belongs to the RnpA family. Consists of a catalytic RNA component (M1 or rnpB) and a protein subunit.

The enzyme catalyses Endonucleolytic cleavage of RNA, removing 5'-extranucleotides from tRNA precursor.. Functionally, RNaseP catalyzes the removal of the 5'-leader sequence from pre-tRNA to produce the mature 5'-terminus. It can also cleave other RNA substrates such as 4.5S RNA. The protein component plays an auxiliary but essential role in vivo by binding to the 5'-leader sequence and broadening the substrate specificity of the ribozyme. In Blochmanniella pennsylvanica (strain BPEN), this protein is Ribonuclease P protein component.